Here is a 414-residue protein sequence, read N- to C-terminus: Gamma-glutamyl phosphate reductase (414 aa).

Belongs to the gamma-glutamyl phosphate reductase family.

The protein resides in the cytoplasm. The enzyme catalyses L-glutamate 5-semialdehyde + phosphate + NADP(+) = L-glutamyl 5-phosphate + NADPH + H(+). The protein operates within amino-acid biosynthesis; L-proline biosynthesis; L-glutamate 5-semialdehyde from L-glutamate: step 2/2. Its function is as follows. Catalyzes the NADPH-dependent reduction of L-glutamate 5-phosphate into L-glutamate 5-semialdehyde and phosphate. The product spontaneously undergoes cyclization to form 1-pyrroline-5-carboxylate. This chain is Gamma-glutamyl phosphate reductase, found in Xanthomonas oryzae pv. oryzae (strain KACC10331 / KXO85).